We begin with the raw amino-acid sequence, 204 residues long: Elongation factor Ts (204 aa).

An involved in Mg(2+) ion dislocation from EF-Tu region spans residues 80–83 (TDFV).

This sequence belongs to the EF-Ts family.

The protein localises to the cytoplasm. In terms of biological role, associates with the EF-Tu.GDP complex and induces the exchange of GDP to GTP. It remains bound to the aminoacyl-tRNA.EF-Tu.GTP complex up to the GTP hydrolysis stage on the ribosome. The polypeptide is Elongation factor Ts (Caldicellulosiruptor saccharolyticus (strain ATCC 43494 / DSM 8903 / Tp8T 6331)).